We begin with the raw amino-acid sequence, 140 residues long: Large-conductance mechanosensitive channel 2 (140 aa).

Helical transmembrane passes span 8-28 (FISKGNVMDLAVGVIIGAAFG), 30-50 (IVDSLVNDIIMPVIGAIFGGL), and 81-101 (GSFITVALNFVILAFIIFLMV).

Belongs to the MscL family. In terms of assembly, homopentamer.

Its subcellular location is the cell inner membrane. Its function is as follows. Channel that opens in response to stretch forces in the membrane lipid bilayer. May participate in the regulation of osmotic pressure changes within the cell. In Mesorhizobium japonicum (strain LMG 29417 / CECT 9101 / MAFF 303099) (Mesorhizobium loti (strain MAFF 303099)), this protein is Large-conductance mechanosensitive channel 2.